The primary structure comprises 88 residues: MANIKSAKKRIKVIKTKTLRNKIIKSSLKTTIKKFLAAVESGNVEEAKVSFTATVKALDMAASKGVIHKNKASRNKSKLALKLNKLTA.

Belongs to the bacterial ribosomal protein bS20 family.

In terms of biological role, binds directly to 16S ribosomal RNA. In Clostridium kluyveri (strain NBRC 12016), this protein is Small ribosomal subunit protein bS20.